We begin with the raw amino-acid sequence, 291 residues long: ATP synthase gamma chain (291 aa).

It belongs to the ATPase gamma chain family. In terms of assembly, F-type ATPases have 2 components, CF(1) - the catalytic core - and CF(0) - the membrane proton channel. CF(1) has five subunits: alpha(3), beta(3), gamma(1), delta(1), epsilon(1). CF(0) has three main subunits: a, b and c.

It localises to the cell inner membrane. In terms of biological role, produces ATP from ADP in the presence of a proton gradient across the membrane. The gamma chain is believed to be important in regulating ATPase activity and the flow of protons through the CF(0) complex. The chain is ATP synthase gamma chain from Variovorax paradoxus (strain S110).